Reading from the N-terminus, the 556-residue chain is 2-succinyl-5-enolpyruvyl-6-hydroxy-3-cyclohexene-1-carboxylate synthase (556 aa).

This sequence belongs to the TPP enzyme family. MenD subfamily. As to quaternary structure, homodimer. Mg(2+) is required as a cofactor. It depends on Mn(2+) as a cofactor. Thiamine diphosphate serves as cofactor.

It catalyses the reaction isochorismate + 2-oxoglutarate + H(+) = 5-enolpyruvoyl-6-hydroxy-2-succinyl-cyclohex-3-ene-1-carboxylate + CO2. Its pathway is quinol/quinone metabolism; 1,4-dihydroxy-2-naphthoate biosynthesis; 1,4-dihydroxy-2-naphthoate from chorismate: step 2/7. It participates in quinol/quinone metabolism; menaquinone biosynthesis. Catalyzes the thiamine diphosphate-dependent decarboxylation of 2-oxoglutarate and the subsequent addition of the resulting succinic semialdehyde-thiamine pyrophosphate anion to isochorismate to yield 2-succinyl-5-enolpyruvyl-6-hydroxy-3-cyclohexene-1-carboxylate (SEPHCHC). In Escherichia coli O127:H6 (strain E2348/69 / EPEC), this protein is 2-succinyl-5-enolpyruvyl-6-hydroxy-3-cyclohexene-1-carboxylate synthase.